The primary structure comprises 367 residues: MASLTFEHVKKSYHSQLTVKDFDLDVKDKELLVLVGPSGCGKSTTLRMVAGLESISEGNLLIDGERVNDLPPKERDIAMVFQNYALYPHMTVFDNMAFGLKLRKMAKQEIAERVHAAARILEIEHLLKRKPKALSGGQRQRVALGRSIVREPKVFLMDEPLSNLDAKLRVTMRTEISKLHQRLEATIIYVTHDQTEAMTMGDRIVVMNEGEIQQVAKPHDIYHYPANLFVAGFIGSPGMNFLKGIIEQQHGELFFTNSSIRLHIPEEKAKRLKEKGYAGEQMIAGVRPEHITQMTGNDQLFDSVFQANVEVNENLGSELIVHVMAGDERLKVRLDGNTRIDAGDSIQLSVKMDHVVFFDAETEEAVY.

One can recognise an ABC transporter domain in the interval 4–234; sequence LTFEHVKKSY…PANLFVAGFI (231 aa). Position 36 to 43 (36 to 43) interacts with ATP; that stretch reads GPSGCGKS.

The protein belongs to the ABC transporter superfamily.

This is an uncharacterized protein from Bacillus subtilis (strain 168).